The primary structure comprises 66 residues: Large ribosomal subunit protein bL31 (66 aa).

Zn(2+) is bound by residues Cys16, Cys18, Cys36, and Cys39.

The protein belongs to the bacterial ribosomal protein bL31 family. Type A subfamily. In terms of assembly, part of the 50S ribosomal subunit. Zn(2+) serves as cofactor.

Binds the 23S rRNA. This Natranaerobius thermophilus (strain ATCC BAA-1301 / DSM 18059 / JW/NM-WN-LF) protein is Large ribosomal subunit protein bL31.